Here is a 34-residue protein sequence, read N- to C-terminus: Jingzhaotoxin F7-10.36 (34 aa).

Intrachain disulfides connect Cys2/Cys17, Cys9/Cys22, and Cys16/Cys29.

Belongs to the neurotoxin 10 (Hwtx-1) family. 50 (Jztz-F7) subfamily. Expressed by the venom gland.

It localises to the secreted. Probable ion channel inhibitor. The chain is Jingzhaotoxin F7-10.36 from Chilobrachys guangxiensis (Chinese earth tiger tarantula).